The chain runs to 143 residues: MLEFLRKLIPWVLAGMLFGLGWHLGSDSMDAKWKQEVHNEYVKRVEAAKSTQRAIDAVSAKYQEDLAALEGSTDRIISDLRSDNKRLRVRVKTTGTSDGQCGFEPDGRAELDDRDAKRILAVTQKGDAWIRALQDTIRELQRK.

Residues 1-7 (MLEFLRK) are Cytoplasmic-facing. Residues 8-24 (LIPWVLAGMLFGLGWHL) traverse the membrane as a helical; Signal-anchor for type II membrane protein segment. Residues 25 to 143 (GSDSMDAKWK…QDTIRELQRK (119 aa)) lie on the Periplasmic side of the membrane.

It belongs to the T7likevirus i-spanin family. Interacts (via C-terminus) with the spanin outer lipoprotein subunit (o-spanin) (via C-terminus). Part of the spanin complex which spans the entire periplasmic space. The spanin complex is composed of spanin inner membrane subunit and spanin outer membrane subunit.

The protein localises to the host cell inner membrane. Its function is as follows. Component of the spanin complex that disrupts the host outer membrane and participates in cell lysis during virus exit. The spanin complex conducts the final step in host lysis by disrupting the outer membrane after holin and endolysin action have permeabilized the inner membrane and degraded the host peptidoglycans. Host outer membrane disruption is possibly due to local fusion between the inner and outer membrane performed by the spanin complex. The chain is Spanin, inner membrane subunit from Escherichia coli (Bacteriophage T7).